Reading from the N-terminus, the 1448-residue chain is Protein clueless (1448 aa).

Disordered regions lie at residues 1–96 (MALE…HAEK), 110–129 (NANV…ADGD), and 265–286 (RTRP…VSDP). Composition is skewed to low complexity over residues 9-26 (NSNA…TKAS) and 41-66 (NLNP…ADGP). Residues 68–77 (AKKKGKKNRN) show a composition bias toward basic residues. Polar residues predominate over residues 78 to 88 (KSPTEPTTEAV). A Phosphoserine modification is found at Ser-270. Positions 424 to 666 (RAEDAFSSKL…RTFPPDVNFL (243 aa)) constitute a Clu domain. Disordered regions lie at residues 726 to 773 (SEKS…SGEA), 958 to 1010 (AVSS…SASD), and 1414 to 1448 (GEAE…ATSS). The span at 748 to 769 (GAEKPDDKEKKNEEEEKKERST) shows a compositional bias: basic and acidic residues. Over residues 966-981 (KKRGNGGKHNKHKSSK) the composition is skewed to basic residues. Residues 986–1007 (QQQQQTTGNQNGSSSGSSNSSS) are compositionally biased toward low complexity. The segment covering 1419 to 1429 (AVSKDIKEQPE) has biased composition (basic and acidic residues).

This sequence belongs to the CLU family.

It localises to the cytoplasm. In terms of biological role, mRNA-binding protein involved in proper cytoplasmic distribution of mitochondria. The sequence is that of Protein clueless from Drosophila melanogaster (Fruit fly).